A 461-amino-acid polypeptide reads, in one-letter code: MTLFVVINIIVMLGLMALLYMMQKKHVSFSKRVFTALGIGIVFGFALHFIYGSSSETITQTSDWFNIAGGGYVKLLQMIVMPLVFISILGAFTKLKLTHNIGKISGLIIGLLIATTAVAAAVGIASALAFDLQAVHVDQGQAETMRGAELEQKSQDMEAKTLPQQIVELLPGNPFLDFTGARPTSTIAVVIFAAFLGIAYLGVNRKQPEQAELFKKMVDAVYAIIMRVVTLILRLTPYGVLAIMTKTIATSDLDSIAKLGKFVIASYAALIVMFIIHLLLITFSGLNPVTYLKKAFPVLVFAFTSRSSAGALPLNIKTQRSLGVPEGIANFAGSFGLSIGQNGCAGIYPAMLAIMIAPTVGQNPLDPSFLFTVIAVVAISSFGVAGVGGGATFAALLVLSALNMPVALAGLLISVEPLIDMGRTALNVSGSMTSGLVTSKVTNELEKDTYQDRTNIIEAEV.

10 helical membrane-spanning segments follow: residues 1-21 (MTLF…LLYM), 33-53 (VFTA…IYGS), 72-92 (YVKL…LGAF), 104-124 (ISGL…AVGI), 183-203 (PTST…YLGV), 224-244 (IIMR…LAIM), 262-282 (FVIA…LLIT), 337-357 (LSIG…IMIA), 369-389 (FLFT…GVGG), and 393-413 (FAAL…GLLI).

It belongs to the dicarboxylate/amino acid:cation symporter (DAACS) (TC 2.A.23) family.

The protein localises to the membrane. In terms of biological role, mediates uptake of L-cystine, the oxidized form of L-cysteine. This Bacillus licheniformis (strain ATCC 14580 / DSM 13 / JCM 2505 / CCUG 7422 / NBRC 12200 / NCIMB 9375 / NCTC 10341 / NRRL NRS-1264 / Gibson 46) protein is L-cystine uptake protein TcyP (tcyP).